A 169-amino-acid chain; its full sequence is Proepiregulin (169 aa).

The N-terminal stretch at 1–29 (MTAGRRMEMLCAGRVPALLLCLGFHLLQA) is a signal peptide. A propeptide spanning residues 30–62 (VLSTTVIPSCIPGESSDNCTALVQTEDNPRVAQ) is cleaved from the precursor. An N-linked (GlcNAc...) asparagine glycan is attached at Asn47. Residues 60 to 119 (VAQVSITKCSSDMNGYCLHGQCIYLVDMSQNYCRCEVGYTGVRCEHFFLTVHQPLSKEYV) are Extracellular-facing. Residues 64–104 (SITKCSSDMNGYCLHGQCIYLVDMSQNYCRCEVGYTGVRCE) form the EGF-like domain. 3 cysteine pairs are disulfide-bonded: Cys68/Cys81, Cys76/Cys92, and Cys94/Cys103. A propeptide spans 109 to 169 (TVHQPLSKEY…TSGDPELPQV (61 aa)) (removed in mature form). Residues 120 to 140 (ALTVILIILFLITVVGSTYYF) form a helical membrane-spanning segment. At 141–169 (CRWYRNRKSKEPKKEYERVTSGDPELPQV) the chain is on the cytoplasmic side.

Interacts with EGFR and ERBB4. As to expression, in normal adults, expressed predominantly in the placenta and peripheral blood leukocytes. High levels were detected in carcinomas of the bladder, lung, kidney and colon.

Its subcellular location is the secreted. It localises to the extracellular space. It is found in the cell membrane. Ligand of the EGF receptor/EGFR and ERBB4. Stimulates EGFR and ERBB4 tyrosine phosphorylation. Contributes to inflammation, wound healing, tissue repair, and oocyte maturation by regulating angiogenesis and vascular remodeling and by stimulating cell proliferation. This Homo sapiens (Human) protein is Proepiregulin (EREG).